The following is a 73-amino-acid chain: Cell division protein ZapB (73 aa).

A coiled-coil region spans residues 3 to 69 (LELLSKLETK…EKVTGLVGLL (67 aa)). The tract at residues 30–50 (EKQKSSTLSEHNQQLNEQNQQ) is disordered. The span at 41-50 (NQQLNEQNQQ) shows a compositional bias: low complexity.

Belongs to the ZapB family. Homodimer. The ends of the coiled-coil dimer bind to each other, forming polymers. Interacts with FtsZ.

The protein localises to the cytoplasm. In terms of biological role, non-essential, abundant cell division factor that is required for proper Z-ring formation. It is recruited early to the divisome by direct interaction with FtsZ, stimulating Z-ring assembly and thereby promoting cell division earlier in the cell cycle. Its recruitment to the Z-ring requires functional FtsA or ZipA. This Shewanella putrefaciens (strain CN-32 / ATCC BAA-453) protein is Cell division protein ZapB.